Consider the following 164-residue polypeptide: Peroxynitrite isomerase 2 (164 aa).

A GXWXGXG motif is present at residues 17 to 23 (GSWAGRG). H155 lines the heme b pocket.

Belongs to the nitrobindin family. In terms of assembly, homodimer. Heme b serves as cofactor.

It carries out the reaction peroxynitrite = nitrate. It participates in nitrogen metabolism. Its function is as follows. Heme-binding protein able to scavenge peroxynitrite and to protect free L-tyrosine against peroxynitrite-mediated nitration, by acting as a peroxynitrite isomerase that converts peroxynitrite to nitrate. Therefore, this protein likely plays a role in peroxynitrite sensing and in the detoxification of reactive nitrogen and oxygen species (RNS and ROS, respectively). Is able to bind nitric oxide (NO) in vitro, but may act as a sensor of peroxynitrite levels in vivo. This Mycobacterium bovis (strain BCG / Pasteur 1173P2) protein is Peroxynitrite isomerase 2.